The sequence spans 183 residues: Capsid protein (183 aa).

The interval 136–183 is disordered; the sequence is NAPILSTLPETTVVRRRGRSPRRRTPSPRRRRSQSPRRRRSQSRESQC. Positions 149–176 are enriched in basic residues; it reads VRRRGRSPRRRTPSPRRRRSQSPRRRRS. Residues Ser155, Ser162, and Ser170 each carry the phosphoserine; by host modification. A 1; half-length repeat occupies 155 to 161; that stretch reads SPRRRTP. Residues 155-177 form a 3 X 8 AA repeats of S-P-R-R-R-[PR]-S-Q region; that stretch reads SPRRRTPSPRRRRSQSPRRRRSQ. The Bipartite nuclear localization signal signature appears at 158 to 175; sequence RRTPSPRRRRSQSPRRRR. Repeat copies occupy residues 162 to 169 and 170 to 177. The segment at 177–183 is RNA binding; it reads QSRESQC.

This sequence belongs to the orthohepadnavirus core antigen family. In terms of assembly, homodimerizes, then multimerizes. Interacts with cytosol exposed regions of viral L glycoprotein present in the reticulum-to-Golgi compartment. Interacts with human FLNB. Phosphorylated form interacts with host importin alpha; this interaction depends on the exposure of the NLS, which itself depends upon genome maturation and/or phosphorylation of the capsid protein. Interacts with host NUP153. In terms of processing, phosphorylated by host SRPK1, SRPK2, and maybe protein kinase C or GAPDH. Phosphorylation is critical for pregenomic RNA packaging. Protein kinase C phosphorylation is stimulated by HBx protein and may play a role in transport of the viral genome to the nucleus at the late step during the viral replication cycle.

It is found in the virion. The protein resides in the host cytoplasm. Self assembles to form an icosahedral capsid. Most capsids appear to be large particles with an icosahedral symmetry of T=4 and consist of 240 copies of capsid protein, though a fraction forms smaller T=3 particles consisting of 180 capsid proteins. Entering capsids are transported along microtubules to the nucleus. Phosphorylation of the capsid is thought to induce exposure of nuclear localization signal in the C-terminal portion of the capsid protein that allows binding to the nuclear pore complex via the importin (karyopherin-) alpha and beta. Capsids are imported in intact form through the nuclear pore into the nuclear basket, where it probably binds NUP153. Only capsids that contain the mature viral genome can release the viral DNA and capsid protein into the nucleoplasm. Immature capsids get stuck in the basket. Capsids encapsulate the pre-genomic RNA and the P protein. Pre-genomic RNA is reverse-transcribed into DNA while the capsid is still in the cytoplasm. The capsid can then either be directed to the nucleus, providing more genomes for transcription, or bud through the endoplasmic reticulum to provide new virions. This chain is Capsid protein, found in Hepatitis B virus genotype B/C subtype adw (isolate Okinawa/pODW282/1998) (HBV-B).